The following is a 309-amino-acid chain: GalNAc(5)-diNAcBac-PP-undecaprenol beta-1,3-glucosyltransferase (309 aa).

The chain crosses the membrane as a helical span at residues 273 to 291 (SLSIKINAPALILLILSII).

This sequence belongs to the glycosyltransferase 2 family.

The protein localises to the membrane. It carries out the reaction [alpha-D-GalNAc-(1-&gt;4)]4-alpha-D-GalNAc-(1-&gt;3)-alpha-D-diNAcBac-tri-trans,hepta-cis-undecaprenyl diphosphate + UDP-alpha-D-glucose = [alpha-D-GalNAc-(1-&gt;4)]2-[beta-D-Glc-(1-&gt;3)]-[alpha-D-GalNAc-(1-&gt;4)]2-alpha-D-GalNAc-(1-&gt;3)-alpha-D-diNAcBac-tri-trans,hepta-cis-undecaprenyl diphosphate + UDP + H(+). It functions in the pathway protein modification; protein glycosylation. Its function is as follows. Glucosyltransferase that adds he final branching glucose to complete the final heptasaccharide structure in the N-linked protein glycosylation pathway. This chain is GalNAc(5)-diNAcBac-PP-undecaprenol beta-1,3-glucosyltransferase (pglI), found in Campylobacter jejuni subsp. jejuni serotype O:2 (strain ATCC 700819 / NCTC 11168).